The sequence spans 212 residues: Adenylate kinase (212 aa).

10 to 15 provides a ligand contact to ATP; that stretch reads GAGKGT. An NMP region spans residues 30–59; sequence STGDMFRAAMVNQTEMGVLAKSYIDKGELV. AMP contacts are provided by residues threonine 31, arginine 36, 57–59, 86–89, and glutamine 93; these read ELV and GYPR. Residues 127–159 form an LID region; it reads GRIIHRVTGETFHKVFNPPVDYKEEDYYQREDD. ATP is bound by residues arginine 128 and 137–138; that span reads TF. AMP contacts are provided by arginine 156 and arginine 167. Glutamine 195 lines the ATP pocket.

This sequence belongs to the adenylate kinase family. In terms of assembly, monomer.

It is found in the cytoplasm. The catalysed reaction is AMP + ATP = 2 ADP. It participates in purine metabolism; AMP biosynthesis via salvage pathway; AMP from ADP: step 1/1. Its function is as follows. Catalyzes the reversible transfer of the terminal phosphate group between ATP and AMP. Plays an important role in cellular energy homeostasis and in adenine nucleotide metabolism. The polypeptide is Adenylate kinase (Streptococcus pneumoniae (strain 70585)).